We begin with the raw amino-acid sequence, 181 residues long: Peptide deformylase (181 aa).

Fe cation contacts are provided by C99 and H141. E142 is an active-site residue. H145 is a binding site for Fe cation.

Belongs to the polypeptide deformylase family. Requires Fe(2+) as cofactor.

The catalysed reaction is N-terminal N-formyl-L-methionyl-[peptide] + H2O = N-terminal L-methionyl-[peptide] + formate. In terms of biological role, removes the formyl group from the N-terminal Met of newly synthesized proteins. Requires at least a dipeptide for an efficient rate of reaction. N-terminal L-methionine is a prerequisite for activity but the enzyme has broad specificity at other positions. The protein is Peptide deformylase of Chlamydia muridarum (strain MoPn / Nigg).